Consider the following 220-residue polypeptide: Protein-L-isoaspartate O-methyltransferase (220 aa).

S65 is an active-site residue.

Belongs to the methyltransferase superfamily. L-isoaspartyl/D-aspartyl protein methyltransferase family.

It localises to the cytoplasm. It catalyses the reaction [protein]-L-isoaspartate + S-adenosyl-L-methionine = [protein]-L-isoaspartate alpha-methyl ester + S-adenosyl-L-homocysteine. Catalyzes the methyl esterification of L-isoaspartyl residues in peptides and proteins that result from spontaneous decomposition of normal L-aspartyl and L-asparaginyl residues. It plays a role in the repair and/or degradation of damaged proteins. The protein is Protein-L-isoaspartate O-methyltransferase of Pelodictyon phaeoclathratiforme (strain DSM 5477 / BU-1).